Reading from the N-terminus, the 1072-residue chain is Teashirt homolog 3 (1072 aa).

Disordered regions lie at residues 44–71 (ACPS…SETS), 130–153 (PSSE…CGSG), and 228–247 (HYRD…WSKP). The span at 57 to 71 (SSHEMDSESHISETS) shows a compositional bias: basic and acidic residues. 2 C2H2-type zinc fingers span residues 204–228 (FRCK…ETGH) and 265–289 (LKCM…KTKH). The span at 228–237 (HYRDDNHETD) shows a compositional bias: basic and acidic residues. The segment at 315–336 (SLELELPSSPDSTGGTPKATLS) is disordered. Residues 376-400 (LKCMECGSSHDTLQELTAHMMVTGH) form a C2H2-type 3; atypical zinc finger. The span at 469 to 481 (AVLDEKPKEKEKA) shows a compositional bias: basic and acidic residues. Disordered stretches follow at residues 469-489 (AVLD…EKYD), 569-594 (NSEI…PMPK), 616-690 (EKMK…PLSG), 784-815 (TKGK…TVTT), and 846-888 (TESH…RQSN). 2 stretches are compositionally biased toward polar residues: residues 571–593 (EIVS…SPMP) and 649–660 (SSGSGFKSQENS). Position 672 is a phosphoserine (S672). Composition is skewed to low complexity over residues 791–815 (GCSL…TVTT) and 847–860 (ESHT…SSIS). A DNA-binding region (homeobox; atypical) is located at residues 882–952 (RKGRQSNWNP…NVKYQLRRTG (71 aa)). 2 C2H2-type zinc fingers span residues 967–989 (FFCN…LESH) and 1032–1055 (YQCK…SKTH).

The protein belongs to the teashirt C2H2-type zinc-finger protein family. As to quaternary structure, interacts (via N-terminus) with HDAC1 and HDAC2; the interaction is direct. Found in a trimeric complex with APBB1 and HDAC1; the interaction between HDAC1 and APBB1 is mediated by TSHZ3. Interacts (via homeobox domain) with APBB1 (via PID domain 1). Expressed in cortical neurons.

Its subcellular location is the nucleus. It localises to the cell projection. It is found in the growth cone. Transcriptional regulator involved in developmental processes. Functions in association with APBB1, SET and HDAC factors as a transcriptional repressor, that inhibits the expression of CASP4. TSHZ3-mediated transcription repression involves the recruitment of histone deacetylases HDAC1 and HDAC2. Associates with chromatin in a region surrounding the CASP4 transcriptional start site(s). Regulates the development of neurons involved in both respiratory rhythm and airflow control. Promotes maintenance of nucleus ambiguus (nA) motoneurons, which govern upper airway function, and establishes a respiratory rhythm generator (RRG) activity compatible with survival at birth. Involved in the differentiation of the proximal uretic smooth muscle cells during developmental processes. Involved in the up-regulation of myocardin, that directs the expression of smooth muscle cells in the proximal ureter. Involved in the modulation of glutamatergic synaptic transmission and long-term synaptic potentiation. This Rattus norvegicus (Rat) protein is Teashirt homolog 3 (Tshz3).